The primary structure comprises 975 residues: MKLEHPDRLMNRTPLSLAALETHDAFAERHIGPDAASQQAMLDTLGFATRAALIDAVIPASIRRAETLPLGPFAQPKSEAEALAALRALADKNQVFRSYIGQGYYNTHTPAVILRNVLENPAWYTAYTPYQPEISQGRLEALLNFQQMVADLTGLEISNASLLDEATAAAEAMTLLQRVGKPQSNVFYVADDVLPQTLEVIKTRAKPIGIEVKSGPAADAAAANAFGVLLQYPGANGDVRDYRALADAIHAAGGHVVVAADILALTVLMPPGEWGADVAVGNTQRFGVPMGFGGPHAAYMAVRDEFKRQMPGRLVGVTVDAQGKPALRLALQTREQHIRREKATSNVCTAQALLAIMASMYAVYHGPRGLKTIALRVNRIAALLAAGIRHLGYATVNDTFFDTLTIDTGARTAQLHAFAQAKRINLRRAGDTRVGVSVDETTTRADLADLLTIFAQAAGATAPDIDALDAGLLPAPALPPSLERTSAYLTHHVFNRHHSETEMLRYLRSLSDKDLALDRSMIPLGSCTMKLNATSEMLPVTWPEFGRIHPFAPAEQTVGYREMIDQLEQMLVAATGYAAVSLQPNAGSQGEYAGLLIIHAYHESRGESHRDVCLIPASAHGTNPASAHMAGMKVVVVACDAQGNVDIADLKAKADAHSHDLAAIMITYPSTHGVFEQNVREICEIVHAHGGQVYVDGANMNAMVGLTAPGQFGGDVSHLNLHKTFCIPHGGGGPGVGPVAVGPHLAKFLPNQRSTGYARGEDGIGAVSAAPYGSASILPISWMYIAMMGAKNLTAATETAILNANYIAKRLAPHYPVLYSGPGGLVAHECILDLRPIKDSSGITVDDVAKRLMDYGFHAPTMSFPVPGTLMVEPTESESQEELDRFIAAMIAIRDEIRAVEEGRADREDNPLRHAPHTAAVVTANEWPHAYSREQAAFPVASLVANKYWPPVGRADNAYGDRNLFCSCVPVSDYA.

Lys-723 carries the N6-(pyridoxal phosphate)lysine modification.

It belongs to the GcvP family. As to quaternary structure, the glycine cleavage system is composed of four proteins: P, T, L and H. Requires pyridoxal 5'-phosphate as cofactor.

It catalyses the reaction N(6)-[(R)-lipoyl]-L-lysyl-[glycine-cleavage complex H protein] + glycine + H(+) = N(6)-[(R)-S(8)-aminomethyldihydrolipoyl]-L-lysyl-[glycine-cleavage complex H protein] + CO2. The glycine cleavage system catalyzes the degradation of glycine. The P protein binds the alpha-amino group of glycine through its pyridoxal phosphate cofactor; CO(2) is released and the remaining methylamine moiety is then transferred to the lipoamide cofactor of the H protein. The protein is Glycine dehydrogenase (decarboxylating) of Burkholderia pseudomallei (strain 668).